The sequence spans 565 residues: MNKIIILISLFLNFLFGYVVCLNENNQKSQNLIIPTYSIKLKSDGEYLVYSGNDTLSIAQASYTNEMMSIGWGYISITTNPKYNDSLQIEAAGYLEGYLSYEMIWQNWNNMMVNQNANNSFGNDIISWAKENILYMNQQIQLNQNDPYWINVNLVLQQLNGLTNGYSDANQNPDRQLSLMDFILLNMNVEIYDIMNSLKNNSSSFYQQPNNNSFDNNQHCSALIKLTDDLTELYTGHTTWSDYYQMVRMIKSYNFRFSKLVAAKSNTTMFSGYPGVLMSVDDFYMLDSKLVVLETTNGIKDNDSELFKLIKPQSVLTWIRIIVTNRIAHSGKSWCEIFEKENSGTYNNQWMIVDYNKFIKGVRVQDGTLYVFEQLPGYVEYADVTNILRTGYWPSFNVPYFETISNMSGFNYQSSSSDSSSSSGSIAYEQYPRSQIFRRDSNKVYSISDFQAFMRYNDFQNDPLAYGDPGNQISSRFDLITPQNNASAAGGIDSKVTSLELINQFLMIAQSGPTHDQEPPFSWSSENWKNKYPTIGQPDTFDFEWVTFSTTSFGSFPSASNEKNY.

A signal peptide spans 1–21 (MNKIIILISLFLNFLFGYVVC). N-linked (GlcNAc...) asparagine glycans are attached at residues asparagine 53, asparagine 84, asparagine 118, asparagine 200, asparagine 201, asparagine 211, asparagine 266, asparagine 302, asparagine 406, and asparagine 485.

It belongs to the phospholipase B-like family.

The protein resides in the secreted. Probable phospholipase. In Dictyostelium discoideum (Social amoeba), this protein is Phospholipase B-like protein C (plbC).